The following is a 211-amino-acid chain: Arginine exporter protein ArgO (211 aa).

The next 6 helical transmembrane spans lie at 1–21 (MLSY…PLGP), 37–57 (LMIA…GIFG), 68–88 (LLAL…FGAL), 111–131 (IIAT…DTFV), 147–167 (WFAL…ALLA), and 186–206 (LVGL…IHHI).

It belongs to the LysE/ArgO transporter (TC 2.A.75) family.

The protein resides in the cell inner membrane. It catalyses the reaction L-arginine(in) = L-arginine(out). In terms of biological role, involved in the export of arginine. Important to control the intracellular level of arginine and the correct balance between arginine and lysine. The polypeptide is Arginine exporter protein ArgO (Enterobacter sp. (strain 638)).